Here is a 406-residue protein sequence, read N- to C-terminus: 3-oxoacyl-[acyl-carrier-protein] synthase 1 (406 aa).

The 405-residue stretch at Met1–Lys405 folds into the Ketosynthase family 3 (KS3) domain. Active-site for beta-ketoacyl synthase activity residues include Cys164, His299, and His335.

The protein belongs to the thiolase-like superfamily. Beta-ketoacyl-ACP synthases family. As to quaternary structure, homodimer.

Its subcellular location is the cytoplasm. The catalysed reaction is a fatty acyl-[ACP] + malonyl-[ACP] + H(+) = a 3-oxoacyl-[ACP] + holo-[ACP] + CO2. It carries out the reaction (3Z)-decenoyl-[ACP] + malonyl-[ACP] + H(+) = 3-oxo-(5Z)-dodecenoyl-[ACP] + holo-[ACP] + CO2. Its pathway is lipid metabolism; fatty acid biosynthesis. Its function is as follows. Involved in the type II fatty acid elongation cycle. Catalyzes the elongation of a wide range of acyl-ACP by the addition of two carbons from malonyl-ACP to an acyl acceptor. Can also use unsaturated fatty acids. Catalyzes a key reaction in unsaturated fatty acid (UFA) synthesis, the elongation of the cis-3-decenoyl-ACP produced by FabA. This Buchnera aphidicola subsp. Acyrthosiphon pisum (strain APS) (Acyrthosiphon pisum symbiotic bacterium) protein is 3-oxoacyl-[acyl-carrier-protein] synthase 1 (fabB).